A 1230-amino-acid polypeptide reads, in one-letter code: Ubiquitin carboxyl-terminal hydrolase 15 (1230 aa).

The MATH domain maps to 39-179 (EDSFTWNIPD…EGTLNITAYV (141 aa)). A USP domain is found at 205–536 (VGFRNQGATC…SAYMLVYIRQ (332 aa)). C214 functions as the Nucleophile in the catalytic mechanism. H465 functions as the Proton acceptor in the catalytic mechanism.

This sequence belongs to the peptidase C19 family. Interacts with PEX6; promoting association with the PEX1-PEX6 ATPase complex.

It localises to the cytoplasm. The protein localises to the cytosol. Its subcellular location is the peroxisome. The catalysed reaction is Thiol-dependent hydrolysis of ester, thioester, amide, peptide and isopeptide bonds formed by the C-terminal Gly of ubiquitin (a 76-residue protein attached to proteins as an intracellular targeting signal).. Its function is as follows. Deubiquitinase involved in peroxisome import by mediating deubiquitination of the peroxisomal import receptor PEX5. Catalyzes deubiquitination of both monoubiquitiated and polyubiquitinated forms of PEX5 following its retrotranslocation into the cytosol, resetting PEX5 for a subsequent import cycle. This chain is Ubiquitin carboxyl-terminal hydrolase 15, found in Saccharomyces cerevisiae (strain ATCC 204508 / S288c) (Baker's yeast).